Reading from the N-terminus, the 672-residue chain is Leucine-rich repeat receptor-like protein kinase PXC1 (672 aa).

An N-terminal signal peptide occupies residues Met-1–Ala-21. The Extracellular portion of the chain corresponds to Gln-22–Gly-269. Asn-23, Asn-44, and Asn-101 each carry an N-linked (GlcNAc...) asparagine glycan. An LRR 1 repeat occupies Leu-87–Cys-110. A Glycyl lysine isopeptide (Lys-Gly) (interchain with G-Cter in ubiquitin) cross-link involves residue Lys-111. LRR repeat units follow at residues Asn-112 to Leu-134, Lys-135 to Phe-158, Arg-160 to Met-181, and Lys-182 to Lys-205. N-linked (GlcNAc...) asparagine glycans are attached at residues Asn-188 and Asn-197. Positions Glu-233 to Pro-249 are enriched in polar residues. Residues Glu-233 to Ser-254 are disordered. A helical transmembrane segment spans residues Ile-270–Ala-290. Topologically, residues Phe-291 to Gly-672 are cytoplasmic. A disordered region spans residues Gly-300–Thr-333. The Protein kinase domain occupies Lys-357 to Ile-645. Residues Leu-363–Val-371 and Lys-386 contribute to the ATP site. A disordered region spans residues Ser-650–Gly-672. The span at Asn-661 to Gly-672 shows a compositional bias: polar residues.

It belongs to the protein kinase superfamily. Ser/Thr protein kinase family. Expressed in the vascular strands of cotyledons, the shoot apex, hypocotyls, roots, leaves, stems and flowers.

The protein localises to the cell membrane. Leucine-rich repeat receptor-like protein kinase involved in secondary cell wall formation in xylem fibers. May play a role in a regulatory network which also incorporates the TDR/PXY signaling pathway and regulates the maturation of interfascicular fiber cells. May promote the initiation of secondary cell wall deposition during the procedure of cell expansion. The chain is Leucine-rich repeat receptor-like protein kinase PXC1 from Arabidopsis thaliana (Mouse-ear cress).